The chain runs to 409 residues: Accessory Sec system protein translocase subunit SecY2 (409 aa).

Helical transmembrane passes span 16-36 (ILITFSLIIIFLLGRYVPIPG), 61-81 (LSQVGVFSLGIGPMMTTMILL), 104-124 (VVMLVIAIIQGLAIAISFQYH), 132-152 (LLLATMILVTGAYIISWIGNL), 161-181 (MTILVVVGMLVGQFNNIPLIF), 190-210 (LAIILFLLWTLVAMYLMITFE), 242-262 (GMAFMYVYTLLMFPQYIIILL), 286-306 (GVVIYMILMLVLSVAFTFVNI), 341-361 (LFGTFSGFFMAFLGGVPLLFA), and 374-394 (TGIFMMITGMSFMILDEFQVI).

This sequence belongs to the SecY/SEC61-alpha family. SecY2 subfamily. In terms of assembly, component of the accessory SecA2/SecY2 protein translocase complex required to export cell wall proteins. May form heterotrimers with SecE and SecG subunits.

The protein resides in the cell membrane. Its function is as follows. Part of the accessory SecA2/SecY2 system specifically required for export of possible cell wall proteins. The central subunit of a protein translocation channel. This is Accessory Sec system protein translocase subunit SecY2 from Streptococcus agalactiae serotype Ia (strain ATCC 27591 / A909 / CDC SS700).